The following is a 522-amino-acid chain: Maturase K (522 aa).

The protein belongs to the intron maturase 2 family. MatK subfamily.

The protein localises to the plastid. Its subcellular location is the chloroplast. Its function is as follows. Usually encoded in the trnK tRNA gene intron. Probably assists in splicing its own and other chloroplast group II introns. The chain is Maturase K from Iris orientalis (Yellowband iris).